The chain runs to 459 residues: Interleukin-1 receptor-associated kinase 4 (459 aa).

Methionine 1 is modified (N-acetylmethionine). The region spanning 20 to 104 (RKLSDFIDPQ…APATLLLPDA (85 aa)) is the Death domain. The residue at position 34 (lysine 34) is an N6-acetyllysine. Residues 115 to 161 (REAATVAQTHGPCQEKDRTSVMPMPKLEHSCEPPDSSSPDNRSVESS) form a disordered region. Positions 186 to 454 (SAGGNRMGEG…PDIAKVQQLL (269 aa)) constitute a Protein kinase domain. ATP contacts are provided by residues 192 to 200 (MGEGGFGVV) and lysine 213. The active-site Proton acceptor is the aspartate 311. Residues 313-316 (KSAN) and aspartate 329 each bind ATP. Residues threonine 342 and threonine 345 each carry the phosphothreonine modification. A Phosphoserine modification is found at serine 346.

Belongs to the protein kinase superfamily. TKL Ser/Thr protein kinase family. Pelle subfamily. As to quaternary structure, associates with MYD88 and IRAK2 to form a ternary complex called the Myddosome. Once phosphorylated, IRAK4 dissociates from the receptor complex and then associates with the TNF receptor-associated factor 6 (TRAF6), IRAK1, and PELI1; this intermediate complex is required for subsequent NF-kappa-B activation. Direct binding of SMAD6 to PELI1 prevents complex formation and hence negatively regulates IL1R-TLR signaling and eventually NF-kappa-B-mediated gene expression. Interacts with IL1RL1. Interacts (when phosphorylated) with IRAK1. May interact (when phosphorylated) with IRAK3. The cofactor is Mg(2+). Post-translationally, phosphorylated.

It is found in the cytoplasm. It catalyses the reaction L-seryl-[protein] + ATP = O-phospho-L-seryl-[protein] + ADP + H(+). It carries out the reaction L-threonyl-[protein] + ATP = O-phospho-L-threonyl-[protein] + ADP + H(+). In terms of biological role, serine/threonine-protein kinase that plays a critical role in initiating innate immune response against foreign pathogens. Involved in Toll-like receptor (TLR) and IL-1R signaling pathways. Is rapidly recruited by MYD88 to the receptor-signaling complex upon TLR activation to form the Myddosome together with IRAK2. Phosphorylates initially IRAK1, thus stimulating the kinase activity and intensive autophosphorylation of IRAK1. Phosphorylates E3 ubiquitin ligases Pellino proteins (PELI1, PELI2 and PELI3) to promote pellino-mediated polyubiquitination of IRAK1. Then, the ubiquitin-binding domain of IKBKG/NEMO binds to polyubiquitinated IRAK1 bringing together the IRAK1-MAP3K7/TAK1-TRAF6 complex and the NEMO-IKKA-IKKB complex. In turn, MAP3K7/TAK1 activates IKKs (CHUK/IKKA and IKBKB/IKKB) leading to NF-kappa-B nuclear translocation and activation. Alternatively, phosphorylates TIRAP to promote its ubiquitination and subsequent degradation. Phosphorylates NCF1 and regulates NADPH oxidase activation after LPS stimulation suggesting a similar mechanism during microbial infections. This Mus musculus (Mouse) protein is Interleukin-1 receptor-associated kinase 4 (Irak4).